The chain runs to 426 residues: Serine--tRNA ligase (426 aa).

Residue 233-235 (TAE) participates in L-serine binding. ATP is bound at residue 264–266 (RRE). An L-serine-binding site is contributed by glutamate 287. 351–354 (EISS) serves as a coordination point for ATP. Serine 386 lines the L-serine pocket.

Belongs to the class-II aminoacyl-tRNA synthetase family. Type-1 seryl-tRNA synthetase subfamily. As to quaternary structure, homodimer. The tRNA molecule binds across the dimer.

Its subcellular location is the cytoplasm. The catalysed reaction is tRNA(Ser) + L-serine + ATP = L-seryl-tRNA(Ser) + AMP + diphosphate + H(+). It carries out the reaction tRNA(Sec) + L-serine + ATP = L-seryl-tRNA(Sec) + AMP + diphosphate + H(+). It participates in aminoacyl-tRNA biosynthesis; selenocysteinyl-tRNA(Sec) biosynthesis; L-seryl-tRNA(Sec) from L-serine and tRNA(Sec): step 1/1. Catalyzes the attachment of serine to tRNA(Ser). Is also able to aminoacylate tRNA(Sec) with serine, to form the misacylated tRNA L-seryl-tRNA(Sec), which will be further converted into selenocysteinyl-tRNA(Sec). This Prochlorococcus marinus (strain NATL2A) protein is Serine--tRNA ligase.